The sequence spans 365 residues: IgG receptor FcRn large subunit p51 (365 aa).

A signal peptide spans 1-23; it reads MGVPRPQPWALGLLLFLLPGSLG. Positions 24–110 are alpha-1; it reads AESHLSLLYH…AFKALGGKGP (87 aa). Over 24-297 the chain is Extracellular; sequence AESHLSLLYH…VELESPAKSS (274 aa). The alpha-2 stretch occupies residues 111-200; the sequence is YTLQGLLGCE…ERGRGNLEWK (90 aa). Cystine bridges form between Cys119-Cys182 and Cys221-Cys275. An N-linked (GlcNAc...) asparagine glycan is attached at Asn125. Residues 201–290 form an alpha-3 region; sequence EPPSMRLKAR…GLAQPLRVEL (90 aa). Positions 202–289 constitute an Ig-like C1-type domain; that stretch reads PPSMRLKARP…AGLAQPLRVE (88 aa). Residues 291–297 form a connecting peptide region; that stretch reads ESPAKSS. A helical membrane pass occupies residues 298 to 321; the sequence is VLVVGIVIGVLLLTAAAVGGALLW. The Cytoplasmic portion of the chain corresponds to 322 to 365; that stretch reads RRMRSGLPAPWISLRGDDTGVLLPTPGEAQDADLKDVNVIPATA. Residue Ser334 is modified to Phosphoserine.

Belongs to the immunoglobulin superfamily. FcRn complex consists of two subunits: p51, and p14 which is equivalent to beta-2-microglobulin. It forms an MHC class I-like heterodimer. Interacts with albumin/ALB; this interaction regulates ALB homeostasis. In terms of assembly, (Microbial infection) Interacts with Echovirus 6, Echovirus 11 and Echovirus 30 capsid protein VP1. Expressed in full-term placenta, heart, lung, liver, muscle, kidney, pancreas, and both fetal and adult small intestine.

It is found in the cell membrane. The protein localises to the endosome membrane. Functionally, cell surface receptor that transfers passive humoral immunity from the mother to the newborn. Binds to the Fc region of monomeric immunoglobulin gamma and mediates its selective uptake from milk. IgG in the milk is bound at the apical surface of the intestinal epithelium. The resultant FcRn-IgG complexes are transcytosed across the intestinal epithelium and IgG is released from FcRn into blood or tissue fluids. Throughout life, contributes to effective humoral immunity by recycling IgG and extending its half-life in the circulation. Mechanistically, monomeric IgG binding to FcRn in acidic endosomes of endothelial and hematopoietic cells recycles IgG to the cell surface where it is released into the circulation. In addition of IgG, regulates homeostasis of the other most abundant circulating protein albumin/ALB. In terms of biological role, (Microbial infection) Acts as an uncoating receptor for a panel of echoviruses including Echovirus 5, 6, 7, 9, 11, 13, 25 and 29. This chain is IgG receptor FcRn large subunit p51 (FCGRT), found in Homo sapiens (Human).